A 727-amino-acid chain; its full sequence is NADH-ubiquinone oxidoreductase 75 kDa subunit, mitochondrial (727 aa).

A mitochondrion-targeting transit peptide spans 1–23 (MLRIPIKRALIGLSNSPKGYVRT). Residues 30-108 (NLIEVFVDGQ…GWNILTNSEK (79 aa)) enclose the 2Fe-2S ferredoxin-type domain. [2Fe-2S] cluster contacts are provided by Cys64, Cys75, and Cys78. N6-acetyllysine is present on Lys84. Residue Cys92 participates in [2Fe-2S] cluster binding. One can recognise a 4Fe-4S His(Cys)3-ligated-type domain in the interval 108–147 (KSKKAREGVMEFLLANHPLDCPICDQGGECDLQDQSMMFG). The [4Fe-4S] cluster site is built by His124, Cys128, Cys131, Cys137, Cys176, Cys179, Cys182, and Cys226. The 4Fe-4S Mo/W bis-MGD-type domain occupies 245–301 (TRKTESIDVMDAVGSNIVVSTRTGEVMRILPRMHEDINEEWISDKTRFAYDGLKRQR). Ser461 is modified (phosphoserine). 3 positions are modified to N6-acetyllysine: Lys467, Lys499, and Lys709.

Belongs to the complex I 75 kDa subunit family. Core subunit of respiratory chain NADH dehydrogenase (Complex I) which is composed of 45 different subunits. This is the largest subunit of complex I and it is a component of the iron-sulfur (IP) fragment of the enzyme. Complex I associates with ubiquinol-cytochrome reductase complex (Complex III) to form supercomplexes. In astrocytes, less complex I is assembled into supercomplexes as compared to neurons. Interacts with MDM2. Interacts with AKAP1. [2Fe-2S] cluster serves as cofactor. Requires [4Fe-4S] cluster as cofactor. In terms of processing, acetylation of Lys-84 is observed in liver mitochondria from fasted mice but not from fed mice. In terms of tissue distribution, brain. More abundant in neurons than in astrocytes (at protein level).

It localises to the mitochondrion inner membrane. It catalyses the reaction a ubiquinone + NADH + 5 H(+)(in) = a ubiquinol + NAD(+) + 4 H(+)(out). Its function is as follows. Core subunit of the mitochondrial membrane respiratory chain NADH dehydrogenase (Complex I) which catalyzes electron transfer from NADH through the respiratory chain, using ubiquinone as an electron acceptor. Essential for catalysing the entry and efficient transfer of electrons within complex I. Plays a key role in the assembly and stability of complex I and participates in the association of complex I with ubiquinol-cytochrome reductase complex (Complex III) to form supercomplexes. The protein is NADH-ubiquinone oxidoreductase 75 kDa subunit, mitochondrial (Ndufs1) of Mus musculus (Mouse).